The primary structure comprises 508 residues: Cyclin-A1-1 (508 aa).

Positions 1–28 are enriched in low complexity; it reads MSSNLAASRRSSSSSSVAAAAAAKRPAV. Disordered stretches follow at residues 1-40 and 82-125; these read MSSN…GKAA and VKKG…ESVL. Residues 29-39 show a composition bias toward gly residues; it reads GEGGGGGGGKA. Over residues 98-111 the composition is skewed to low complexity; sequence ASAVKSASAKPAPA.

Belongs to the cyclin family. Cyclin AB subfamily. As to expression, expressed in the dividing region of the root cap and root apex. Expressed in the intercalary meristem of internodes and in adventitious roots under submergence conditions.

Involved in the control of the cell cycle at the G2/M (mitosis) transition. In Oryza sativa subsp. japonica (Rice), this protein is Cyclin-A1-1 (CYCA1-1).